The following is a 379-amino-acid chain: Cobalt-precorrin-5B C(1)-methyltransferase (379 aa).

The protein belongs to the CbiD family.

The enzyme catalyses Co-precorrin-5B + S-adenosyl-L-methionine = Co-precorrin-6A + S-adenosyl-L-homocysteine. The protein operates within cofactor biosynthesis; adenosylcobalamin biosynthesis; cob(II)yrinate a,c-diamide from sirohydrochlorin (anaerobic route): step 6/10. Its function is as follows. Catalyzes the methylation of C-1 in cobalt-precorrin-5B to form cobalt-precorrin-6A. This is Cobalt-precorrin-5B C(1)-methyltransferase from Salmonella arizonae (strain ATCC BAA-731 / CDC346-86 / RSK2980).